A 290-amino-acid polypeptide reads, in one-letter code: uncharacterized protein (290 aa).

Positions 161 to 216 (SNQREVESLEQLVHEQLNKLNTESKMEFENRKNDTKNEVQQLSARIVELHNLLAVS) form a coiled coil. A helical transmembrane segment spans residues 236–256 (AGVVMAFTGFLVLVIPFGLGV).

Its subcellular location is the mitochondrion membrane. This is an uncharacterized protein from Schizosaccharomyces pombe (strain 972 / ATCC 24843) (Fission yeast).